A 355-amino-acid chain; its full sequence is MKIRIDIPHHPYDIQIEKGCMAQAGQWLRELWQPQKVVIVTDNHVASLYAEKVKLSLEDAGFQVAVFDFLEGEERKNLTTVQKVYEFLVKQGLTRSDGIVALGGGVVGDLAGFVASTYMRGIHFVQIPTSLTAQVDSSIGGKTGVNTPFAKNMVGTFAQPDGVLIDPLVLETLGKRELIEGMGEVIKYGLIEDPELWALLTGLNGSVESILEHAETLIEHSCQVKRKMVVEDELDNGIRLYLNFGHTIGHAIEATAGYGKVMHGEAVAMGMVQISKVAEEKGLMPAGITQSITEMCQKFGLPVDYENWKVDKLYQALTHDKKARGNTLKLVLVPELGSATIHPVSLEEMKDYLVK.

Residues 71–76 (EGEERK), 105–109 (GVVGD), 129–130 (TS), Lys-142, and Lys-151 contribute to the NAD(+) site. Residues Glu-184, His-246, and His-263 each coordinate Zn(2+).

This sequence belongs to the sugar phosphate cyclases superfamily. Dehydroquinate synthase family. Requires Co(2+) as cofactor. Zn(2+) is required as a cofactor. It depends on NAD(+) as a cofactor.

It localises to the cytoplasm. It catalyses the reaction 7-phospho-2-dehydro-3-deoxy-D-arabino-heptonate = 3-dehydroquinate + phosphate. It functions in the pathway metabolic intermediate biosynthesis; chorismate biosynthesis; chorismate from D-erythrose 4-phosphate and phosphoenolpyruvate: step 2/7. Its function is as follows. Catalyzes the conversion of 3-deoxy-D-arabino-heptulosonate 7-phosphate (DAHP) to dehydroquinate (DHQ). The protein is 3-dehydroquinate synthase of Streptococcus pneumoniae (strain Hungary19A-6).